Reading from the N-terminus, the 235-residue chain is Ribonuclease 3 (235 aa).

The RNase III domain occupies 6–131 (IDQLERLTEH…LIAVMYLDGG (126 aa)). Glutamate 44 is a binding site for Mg(2+). The active site involves aspartate 48. Mg(2+) is bound by residues aspartate 117 and glutamate 120. Residue glutamate 120 is part of the active site. The region spanning 156–225 (DAKTELQEWA…AEKVLRREGI (70 aa)) is the DRBM domain.

Belongs to the ribonuclease III family. As to quaternary structure, homodimer. Mg(2+) serves as cofactor.

It is found in the cytoplasm. The catalysed reaction is Endonucleolytic cleavage to 5'-phosphomonoester.. In terms of biological role, digests double-stranded RNA. Involved in the processing of primary rRNA transcript to yield the immediate precursors to the large and small rRNAs (23S and 16S). Processes some mRNAs, and tRNAs when they are encoded in the rRNA operon. Processes pre-crRNA and tracrRNA of type II CRISPR loci if present in the organism. The protein is Ribonuclease 3 of Bartonella quintana (strain Toulouse) (Rochalimaea quintana).